A 590-amino-acid polypeptide reads, in one-letter code: Aspartate--tRNA(Asp/Asn) ligase (590 aa).

Position 175 (Glu-175) interacts with L-aspartate. Positions 199-202 (QQYK) are aspartate. Arg-221 and His-450 together coordinate L-aspartate. 221–223 (RDE) serves as a coordination point for ATP. Glu-484 lines the ATP pocket. An L-aspartate-binding site is contributed by Arg-491. 536-539 (GVDR) contacts ATP.

The protein belongs to the class-II aminoacyl-tRNA synthetase family. Type 1 subfamily. Homodimer.

The protein resides in the cytoplasm. The catalysed reaction is tRNA(Asx) + L-aspartate + ATP = L-aspartyl-tRNA(Asx) + AMP + diphosphate. Aspartyl-tRNA synthetase with relaxed tRNA specificity since it is able to aspartylate not only its cognate tRNA(Asp) but also tRNA(Asn). Reaction proceeds in two steps: L-aspartate is first activated by ATP to form Asp-AMP and then transferred to the acceptor end of tRNA(Asp/Asn). In Bradyrhizobium sp. (strain BTAi1 / ATCC BAA-1182), this protein is Aspartate--tRNA(Asp/Asn) ligase.